The sequence spans 147 residues: MVHLTPEEKTAVNALWGKVNVDAVGGEALGRLLVVYPWTQRFFESFGDLSSPDAVMGNPKVKAHGKKVLGAFSDGLAHLDNLKGTFSQLSELHCDKLHVDPENFRLLGNVLVCVLARNFGKEFTPQMQAAYQKVVAGVANALAHKYH.

Val-2 carries the post-translational modification N-acetylalanine; in variant Niigata. In terms of domain architecture, Globin spans 3-147; it reads HLTPEEKTAV…VANALAHKYH (145 aa). The residue at position 51 (Ser-51) is a Phosphoserine. Positions 64 and 93 each coordinate heme b.

It belongs to the globin family. Heterotetramer of two alpha chains and two delta chains in adult hemoglobin A2 (HbA2). HbA2 represents less than 3.5% of adult hemoglobin. In terms of tissue distribution, red blood cells.

Involved in oxygen transport from the lung to the various peripheral tissues. The sequence is that of Hemoglobin subunit delta (HBD) from Homo sapiens (Human).